We begin with the raw amino-acid sequence, 429 residues long: MSKPMTMSQKILAYHAGKEYVEPGDLIFANVDLVLGNDVTTPVAIKEFEKIGVDKVFDKDKITIVPDHFTPNKDIKSAQQCKMVREFAKKYDITNYFEVGEMGIEHALLPEKGLVVPGDLVIGADSHTCTYGALGAFSTGIGSTDMACAMATGKCWFKVPEAIKFVLYGKKTGWTSGKDIILHIIGMIGVDGALYKSMEYTGEGLKSLSMDDRFTIANMAIEAGAKNGIFEVDEKTIEYVKQHSTKPYKIFKADEDAEYSEVYEIDISKIRPTVAFPHLPENTKTIDEITEKIYIDQVVIGSCTNGRIEDLRIAAKILKGRKVKKGLRCIIFPATQNIYKQALKEGLIEIFIDAGCVVSTPTCGPCLGGHMGILAEGERALATTNRNFVGRMGHPNSEVYLSSPAIAAASAVLGYIGSPEELGMKGDEE.

3 residues coordinate [4Fe-4S] cluster: cysteine 303, cysteine 363, and cysteine 366.

It belongs to the aconitase/IPM isomerase family. LeuC type 2 subfamily. As to quaternary structure, heterodimer of LeuC and LeuD. [4Fe-4S] cluster serves as cofactor.

The catalysed reaction is (2R,3S)-3-isopropylmalate = (2S)-2-isopropylmalate. Its pathway is amino-acid biosynthesis; L-leucine biosynthesis; L-leucine from 3-methyl-2-oxobutanoate: step 2/4. Catalyzes the isomerization between 2-isopropylmalate and 3-isopropylmalate, via the formation of 2-isopropylmaleate. In Caldicellulosiruptor saccharolyticus (strain ATCC 43494 / DSM 8903 / Tp8T 6331), this protein is 3-isopropylmalate dehydratase large subunit.